Reading from the N-terminus, the 314-residue chain is Ribosomal protein uL3 glutamine methyltransferase (314 aa).

This sequence belongs to the protein N5-glutamine methyltransferase family. PrmB subfamily.

It catalyses the reaction L-glutaminyl-[ribosomal protein uL3] + S-adenosyl-L-methionine = N(5)-methyl-L-glutaminyl-[ribosomal protein uL3] + S-adenosyl-L-homocysteine + H(+). Its function is as follows. Methylates large ribosomal subunit protein uL3 on a specific glutamine residue. The protein is Ribosomal protein uL3 glutamine methyltransferase of Haemophilus influenzae (strain ATCC 51907 / DSM 11121 / KW20 / Rd).